The sequence spans 1203 residues: DNA-directed RNA polymerase subunit beta (1203 aa).

Residues 1174-1195 (AAQEAKAAFEAEEAEKATKAEA) show a composition bias toward basic and acidic residues. The segment at 1174–1203 (AAQEAKAAFEAEEAEKATKAEATEEAAEQE) is disordered.

The protein belongs to the RNA polymerase beta chain family. In terms of assembly, the RNAP catalytic core consists of 2 alpha, 1 beta, 1 beta' and 1 omega subunit. When a sigma factor is associated with the core the holoenzyme is formed, which can initiate transcription.

The enzyme catalyses RNA(n) + a ribonucleoside 5'-triphosphate = RNA(n+1) + diphosphate. In terms of biological role, DNA-dependent RNA polymerase catalyzes the transcription of DNA into RNA using the four ribonucleoside triphosphates as substrates. The polypeptide is DNA-directed RNA polymerase subunit beta (Streptococcus pneumoniae (strain P1031)).